Here is a 62-residue protein sequence, read N- to C-terminus: Alpha-elapitoxin-Pc1 (62 aa).

Cystine bridges form between cysteine 3–cysteine 24, cysteine 17–cysteine 41, cysteine 43–cysteine 54, and cysteine 55–cysteine 60.

It belongs to the three-finger toxin family. Short-chain subfamily. Type I alpha-neurotoxin sub-subfamily. As to expression, expressed by the venom gland.

The protein localises to the secreted. Its function is as follows. Bird-specific neurotoxin (tested on chicken) that acts as pseudo-irreversible antagonists at the nicotinic acetylcholine receptor (nAChR) of the skeletal neuromuscular junction. Has no significant effect on the electrically-induced twitches of the rat isolated phrenic nerve-diaphragm preparation. This Pseudechis colletti (Collett's snake) protein is Alpha-elapitoxin-Pc1.